Consider the following 210-residue polypeptide: NDR1/HIN1-like protein 12 (210 aa).

Residues 23–43 (GVIIGFIIIVLITIFLVWIIL) form a helical membrane-spanning segment. A glycan (N-linked (GlcNAc...) asparagine) is linked at asparagine 61.

As to quaternary structure, may form oligomers or be a component of larger protein complex in plasma membranes. Expressed in leaves, stems and flowers, and, to a lower extent, in siliques and roots.

Its subcellular location is the cell membrane. May play a role in plant immunity. In Arabidopsis thaliana (Mouse-ear cress), this protein is NDR1/HIN1-like protein 12.